We begin with the raw amino-acid sequence, 97 residues long: ESAT-6-like protein EsxG (97 aa).

The protein belongs to the WXG100 family. CFP-10 subfamily. Forms a tight 1:1 complex with EsxH.

The protein resides in the secreted. This is ESAT-6-like protein EsxG from Mycolicibacterium smegmatis (strain ATCC 700084 / mc(2)155) (Mycobacterium smegmatis).